The sequence spans 789 residues: Glycerol-3-phosphate acyltransferase (789 aa).

The short motif at 275 to 280 is the HXXXXD motif element; it reads SHRSYI.

Belongs to the GPAT/DAPAT family.

It is found in the cell membrane. It carries out the reaction sn-glycerol 3-phosphate + an acyl-CoA = a 1-acyl-sn-glycero-3-phosphate + CoA. Its pathway is phospholipid metabolism; CDP-diacylglycerol biosynthesis; CDP-diacylglycerol from sn-glycerol 3-phosphate: step 1/3. In Mycobacterium bovis (strain BCG / Pasteur 1173P2), this protein is Glycerol-3-phosphate acyltransferase.